The primary structure comprises 262 residues: Acyl-[acyl-carrier-protein]--UDP-N-acetylglucosamine O-acyltransferase (262 aa).

It belongs to the transferase hexapeptide repeat family. LpxA subfamily. As to quaternary structure, homotrimer.

The protein resides in the cytoplasm. The enzyme catalyses a (3R)-hydroxyacyl-[ACP] + UDP-N-acetyl-alpha-D-glucosamine = a UDP-3-O-[(3R)-3-hydroxyacyl]-N-acetyl-alpha-D-glucosamine + holo-[ACP]. It participates in glycolipid biosynthesis; lipid IV(A) biosynthesis; lipid IV(A) from (3R)-3-hydroxytetradecanoyl-[acyl-carrier-protein] and UDP-N-acetyl-alpha-D-glucosamine: step 1/6. Functionally, involved in the biosynthesis of lipid A, a phosphorylated glycolipid that anchors the lipopolysaccharide to the outer membrane of the cell. This Yersinia pseudotuberculosis serotype O:1b (strain IP 31758) protein is Acyl-[acyl-carrier-protein]--UDP-N-acetylglucosamine O-acyltransferase.